A 31-amino-acid polypeptide reads, in one-letter code: MLTITSYFGFLLAALTITPALLISLNKIQLI.

Residues 4–26 traverse the membrane as a helical segment; the sequence is ITSYFGFLLAALTITPALLISLN.

This sequence belongs to the PetL family. As to quaternary structure, the 4 large subunits of the cytochrome b6-f complex are cytochrome b6, subunit IV (17 kDa polypeptide, PetD), cytochrome f and the Rieske protein, while the 4 small subunits are PetG, PetL, PetM and PetN. The complex functions as a dimer.

Its subcellular location is the plastid. The protein localises to the chloroplast thylakoid membrane. Component of the cytochrome b6-f complex, which mediates electron transfer between photosystem II (PSII) and photosystem I (PSI), cyclic electron flow around PSI, and state transitions. PetL is important for photoautotrophic growth as well as for electron transfer efficiency and stability of the cytochrome b6-f complex. The sequence is that of Cytochrome b6-f complex subunit 6 from Dioscorea elephantipes (Elephant's foot yam).